A 93-amino-acid chain; its full sequence is Integration host factor subunit beta (93 aa).

This sequence belongs to the bacterial histone-like protein family. Heterodimer of an alpha and a beta chain.

This protein is one of the two subunits of integration host factor, a specific DNA-binding protein that functions in genetic recombination as well as in transcriptional and translational control. The chain is Integration host factor subunit beta from Idiomarina loihiensis (strain ATCC BAA-735 / DSM 15497 / L2-TR).